Reading from the N-terminus, the 132-residue chain is Peptide methionine sulfoxide reductase MsrB (132 aa).

The MsrB domain maps to 8 to 130 (LDSWREELTE…NSASLKLVPR (123 aa)). Cys-47, Cys-50, Cys-96, and Cys-99 together coordinate Zn(2+). Cys-119 serves as the catalytic Nucleophile.

The protein belongs to the MsrB Met sulfoxide reductase family. Zn(2+) is required as a cofactor.

The catalysed reaction is L-methionyl-[protein] + [thioredoxin]-disulfide + H2O = L-methionyl-(R)-S-oxide-[protein] + [thioredoxin]-dithiol. In Pseudomonas aeruginosa (strain UCBPP-PA14), this protein is Peptide methionine sulfoxide reductase MsrB.